Reading from the N-terminus, the 282-residue chain is Lipoyl synthase (282 aa).

The [4Fe-4S] cluster site is built by cysteine 37, cysteine 42, cysteine 48, cysteine 63, cysteine 67, cysteine 70, and serine 274. Residues 49 to 263 enclose the Radical SAM core domain; the sequence is WGKGTATFMI…KTIGLEKGFS (215 aa).

The protein belongs to the radical SAM superfamily. Lipoyl synthase family. The cofactor is [4Fe-4S] cluster.

The protein localises to the cytoplasm. It catalyses the reaction [[Fe-S] cluster scaffold protein carrying a second [4Fe-4S](2+) cluster] + N(6)-octanoyl-L-lysyl-[protein] + 2 oxidized [2Fe-2S]-[ferredoxin] + 2 S-adenosyl-L-methionine + 4 H(+) = [[Fe-S] cluster scaffold protein] + N(6)-[(R)-dihydrolipoyl]-L-lysyl-[protein] + 4 Fe(3+) + 2 hydrogen sulfide + 2 5'-deoxyadenosine + 2 L-methionine + 2 reduced [2Fe-2S]-[ferredoxin]. Its pathway is protein modification; protein lipoylation via endogenous pathway; protein N(6)-(lipoyl)lysine from octanoyl-[acyl-carrier-protein]: step 2/2. Catalyzes the radical-mediated insertion of two sulfur atoms into the C-6 and C-8 positions of the octanoyl moiety bound to the lipoyl domains of lipoate-dependent enzymes, thereby converting the octanoylated domains into lipoylated derivatives. This Bacteroides thetaiotaomicron (strain ATCC 29148 / DSM 2079 / JCM 5827 / CCUG 10774 / NCTC 10582 / VPI-5482 / E50) protein is Lipoyl synthase.